A 365-amino-acid polypeptide reads, in one-letter code: uncharacterized protein (365 aa).

Residues 45–289 (FSIGKSLTII…LKEVKKSNPK (245 aa)) form the Radical SAM core domain. The [4Fe-4S] cluster site is built by cysteine 60, cysteine 68, and cysteine 71.

It depends on [4Fe-4S] cluster as a cofactor.

This is an uncharacterized protein from Methanocaldococcus jannaschii (strain ATCC 43067 / DSM 2661 / JAL-1 / JCM 10045 / NBRC 100440) (Methanococcus jannaschii).